The following is a 648-amino-acid chain: Rab11 family-interacting protein 1 (648 aa).

In terms of domain architecture, C2 spans 1–129 (MSLAASAGRG…DQSRRKKQWY (129 aa)). Residues 164–188 (SMKDKSRNPFGKLKDKIKGKNKDNT) are compositionally biased toward basic and acidic residues. 3 disordered regions span residues 164–470 (SMKD…GRKG), 483–503 (VRRPEKDAVPVASQWGSSQNP), and 516–555 (VESKCEPKPPVPVPRTPQTRAVKPRPHPVKPMNTTAPKIT). The segment covering 189–201 (SDTASAIVPSTTP) has biased composition (polar residues). A phosphoserine mark is found at S205, S209, and S237. Composition is skewed to polar residues over residues 227-242 (PSLQKTPLSQSMSVLP) and 271-296 (SSASEVMSQKRTSSTDHTQPNQSNFS). Phosphoserine occurs at positions 304, 319, 343, 345, 347, 349, 360, 361, and 386. A compositionally biased stretch (polar residues) spans 314 to 323 (DSLSRSNVCI). Basic and acidic residues-rich tracts occupy residues 381–394 (SDRRLSDSSTKDSM) and 422–436 (ATKETKDSKKQESKK). Residue S438 is modified to Phosphoserine. Over residues 445–454 (GKKDVAKGSE) the composition is skewed to basic and acidic residues. An FIP-RBD domain is found at 576–638 (KKYQPSDPAF…EETPNILRVP (63 aa)). Positions 584-648 (AFAYAQLTHD…AQTGKKAGKM (65 aa)) are necessary for interaction with RAB4A and RAB11A, subcellular location and endosomal recycling.

In terms of assembly, homooligomer. Interacts with RAB11A, RAB11B, RAB25, RAB4A and RAB14.

The protein resides in the recycling endosome. The protein localises to the cytoplasmic vesicle. A Rab11 effector protein involved in the endosomal recycling process. Also involved in controlling membrane trafficking along the phagocytic pathway and in phagocytosis. Interaction with RAB14 may function in the process of neurite formation. The polypeptide is Rab11 family-interacting protein 1 (Rattus norvegicus (Rat)).